Here is a 37-residue protein sequence, read N- to C-terminus: Large ribosomal subunit protein bL36c (37 aa).

Belongs to the bacterial ribosomal protein bL36 family.

It localises to the plastid. The protein resides in the chloroplast. The protein is Large ribosomal subunit protein bL36c of Cryptomeria japonica (Japanese cedar).